Here is a 552-residue protein sequence, read N- to C-terminus: Glycosyltransferase family 92 protein RCOM_0530710 (552 aa).

A helical; Signal-anchor membrane pass occupies residues 12 to 34; it reads WNRFFWCTLLLVLSCVLFTASTF. One can recognise a GT92 domain in the interval 277-520; sequence KPHEMCICTM…GTRAVEPPDW (244 aa).

Belongs to the glycosyltransferase 92 family.

It localises to the membrane. This chain is Glycosyltransferase family 92 protein RCOM_0530710, found in Ricinus communis (Castor bean).